We begin with the raw amino-acid sequence, 65 residues long: Beta-defensin 41 (65 aa).

The signal sequence occupies residues 1 to 19; that stretch reads MKFHLFFFILLFGATILTA. Intrachain disulfides connect Cys35-Cys63, Cys42-Cys56, and Cys46-Cys64.

This sequence belongs to the beta-defensin family. Isoform 2 is epididymis-specific and expressed mainly in the proximal caput.

The protein resides in the secreted. Its function is as follows. Has bactericidal activity. Isoform 2 may play a role in the antimicrobial protection of sperm and urogenital tract epithelia. In Mus musculus (Mouse), this protein is Beta-defensin 41.